The following is a 417-amino-acid chain: Serine--tRNA ligase (417 aa).

Position 225 to 227 (225 to 227) interacts with L-serine; it reads TLE. An ATP-binding site is contributed by 256-258; it reads RQE. Residue Glu-279 participates in L-serine binding. 343-346 contributes to the ATP binding site; the sequence is EVSS. Residue Thr-379 participates in L-serine binding.

This sequence belongs to the class-II aminoacyl-tRNA synthetase family. Type-1 seryl-tRNA synthetase subfamily. In terms of assembly, homodimer. The tRNA molecule binds across the dimer.

The protein resides in the cytoplasm. The catalysed reaction is tRNA(Ser) + L-serine + ATP = L-seryl-tRNA(Ser) + AMP + diphosphate + H(+). It catalyses the reaction tRNA(Sec) + L-serine + ATP = L-seryl-tRNA(Sec) + AMP + diphosphate + H(+). It participates in aminoacyl-tRNA biosynthesis; selenocysteinyl-tRNA(Sec) biosynthesis; L-seryl-tRNA(Sec) from L-serine and tRNA(Sec): step 1/1. Its function is as follows. Catalyzes the attachment of serine to tRNA(Ser). Is also able to aminoacylate tRNA(Sec) with serine, to form the misacylated tRNA L-seryl-tRNA(Sec), which will be further converted into selenocysteinyl-tRNA(Sec). This is Serine--tRNA ligase from Mycoplasma genitalium (strain ATCC 33530 / DSM 19775 / NCTC 10195 / G37) (Mycoplasmoides genitalium).